The sequence spans 300 residues: Protoheme IX farnesyltransferase (300 aa).

Helical transmembrane passes span 24-44, 46-66, 99-119, 122-142, 145-165, 176-196, 220-240, 244-264, and 275-295; these read GLAISVVFSSLAGYLLGIHEF, LETIYVLLMLAIGGYCMVGAS, AFTIATILTITGLTILYMINP, AMFGAISIFLYTCVYTPLKTV, LSVFVGAFPGAIPFMLGWVAA, LFLIQFFWQFPHFWAIGWFLF, IVLYTLWLTAASILPSFGYTG, LTPVSAIIVVLLGLWMLVYAI, and AKTLMLVSVAYISLIQVVYIL.

Belongs to the UbiA prenyltransferase family. Protoheme IX farnesyltransferase subfamily.

Its subcellular location is the cell inner membrane. The catalysed reaction is heme b + (2E,6E)-farnesyl diphosphate + H2O = Fe(II)-heme o + diphosphate. Its pathway is porphyrin-containing compound metabolism; heme O biosynthesis; heme O from protoheme: step 1/1. Functionally, converts heme B (protoheme IX) to heme O by substitution of the vinyl group on carbon 2 of heme B porphyrin ring with a hydroxyethyl farnesyl side group. This is Protoheme IX farnesyltransferase from Flavobacterium psychrophilum (strain ATCC 49511 / DSM 21280 / CIP 103535 / JIP02/86).